The chain runs to 91 residues: Small ribosomal subunit protein uS19 (91 aa).

Belongs to the universal ribosomal protein uS19 family.

Functionally, protein S19 forms a complex with S13 that binds strongly to the 16S ribosomal RNA. This chain is Small ribosomal subunit protein uS19, found in Methylacidiphilum infernorum (isolate V4) (Methylokorus infernorum (strain V4)).